Consider the following 1487-residue polypeptide: Chromosome partition protein MukB (1487 aa).

34 to 41 contributes to the ATP binding site; that stretch reads GGNGAGKS. Coiled-coil stretches lie at residues 297–458, 506–601, 637–666, 781–806, 836–1109, and 1210–1266; these read GSRE…TNAL, RESQ…LEAI, LEQE…RLAS, RAAR…AKAA, EQAL…ELRT, and VEAI…LSNI. Residues 667–784 form a flexible hinge region; sequence PGGSNDPRLK…EIPLFGRAAR (118 aa).

It belongs to the SMC family. MukB subfamily. Homodimerization via its hinge domain. Binds to DNA via its C-terminal region. Interacts, and probably forms a ternary complex, with MukE and MukF via its C-terminal region. The complex formation is stimulated by calcium or magnesium. Interacts with tubulin-related protein FtsZ.

It is found in the cytoplasm. Its subcellular location is the nucleoid. In terms of biological role, plays a central role in chromosome condensation, segregation and cell cycle progression. Functions as a homodimer, which is essential for chromosome partition. Involved in negative DNA supercoiling in vivo, and by this means organize and compact chromosomes. May achieve or facilitate chromosome segregation by condensation DNA from both sides of a centrally located replisome during cell division. The chain is Chromosome partition protein MukB from Vibrio parahaemolyticus serotype O3:K6 (strain RIMD 2210633).